The sequence spans 65 residues: Large ribosomal subunit protein bL35 (65 aa).

Belongs to the bacterial ribosomal protein bL35 family.

This Magnetococcus marinus (strain ATCC BAA-1437 / JCM 17883 / MC-1) protein is Large ribosomal subunit protein bL35.